Consider the following 188-residue polypeptide: Inosine triphosphate pyrophosphatase (188 aa).

9-14 (TGNAKK) contacts ITP. Glu-39 provides a ligand contact to Mg(2+). Residues Lys-51, 67–68 (DT), Lys-84, 143–146 (FGWD), Lys-166, and 171–172 (HR) each bind ITP.

The protein belongs to the HAM1 NTPase family. As to quaternary structure, homodimer. Requires Mg(2+) as cofactor. Mn(2+) is required as a cofactor.

It localises to the cytoplasm. The catalysed reaction is ITP + H2O = IMP + diphosphate + H(+). It catalyses the reaction dITP + H2O = dIMP + diphosphate + H(+). It carries out the reaction XTP + H2O = XMP + diphosphate + H(+). In terms of biological role, pyrophosphatase that hydrolyzes non-canonical purine nucleotides such as inosine triphosphate (ITP), deoxyinosine triphosphate (dITP) or xanthosine 5'-triphosphate (XTP) to their respective monophosphate derivatives. The enzyme does not distinguish between the deoxy- and ribose forms. Probably excludes non-canonical purines from RNA and DNA precursor pools, thus preventing their incorporation into RNA and DNA and avoiding chromosomal lesions. The polypeptide is Inosine triphosphate pyrophosphatase (Aedes aegypti (Yellowfever mosquito)).